Here is a 231-residue protein sequence, read N- to C-terminus: Secreted LysM effector LysM13 (231 aa).

The first 19 residues, 1–19, serve as a signal peptide directing secretion; it reads MVFLSLKYALSGLAATAAA. Residues asparagine 30, asparagine 34, asparagine 77, asparagine 100, asparagine 130, asparagine 201, and asparagine 226 are each glycosylated (N-linked (GlcNAc...) asparagine). A LysM domain is found at 38 to 82; sequence TTYTTTSEDTIFTVARKFDRGPCDIARYNRMIDAEHIFANFTLRI.

The protein belongs to the secreted LysM effector family.

The protein localises to the secreted. Secreted LysM effector that might have a role in sequestration of chitin oligosaccharides (breakdown products of fungal cell walls that are released during invasion and act as triggers of host immunity) to dampen host defense. The polypeptide is Secreted LysM effector LysM13 (Penicillium expansum (Blue mold rot fungus)).